Here is a 288-residue protein sequence, read N- to C-terminus: Ribosomal RNA small subunit methyltransferase A (288 aa).

S-adenosyl-L-methionine contacts are provided by Asn-18, Leu-20, Gly-45, Glu-66, Asp-91, and Asn-118.

The protein belongs to the class I-like SAM-binding methyltransferase superfamily. rRNA adenine N(6)-methyltransferase family. RsmA subfamily.

Its subcellular location is the cytoplasm. The catalysed reaction is adenosine(1518)/adenosine(1519) in 16S rRNA + 4 S-adenosyl-L-methionine = N(6)-dimethyladenosine(1518)/N(6)-dimethyladenosine(1519) in 16S rRNA + 4 S-adenosyl-L-homocysteine + 4 H(+). In terms of biological role, specifically dimethylates two adjacent adenosines (A1518 and A1519) in the loop of a conserved hairpin near the 3'-end of 16S rRNA in the 30S particle. May play a critical role in biogenesis of 30S subunits. The polypeptide is Ribosomal RNA small subunit methyltransferase A (Mannheimia succiniciproducens (strain KCTC 0769BP / MBEL55E)).